A 335-amino-acid chain; its full sequence is Acetyl-coenzyme A carboxylase carboxyl transferase subunit alpha (335 aa).

Residues 40 to 294 (QLETLAARRR…KEAIEKHLNA (255 aa)) form the CoA carboxyltransferase C-terminal domain.

Belongs to the AccA family. In terms of assembly, acetyl-CoA carboxylase is a heterohexamer composed of biotin carboxyl carrier protein (AccB), biotin carboxylase (AccC) and two subunits each of ACCase subunit alpha (AccA) and ACCase subunit beta (AccD).

Its subcellular location is the cytoplasm. The catalysed reaction is N(6)-carboxybiotinyl-L-lysyl-[protein] + acetyl-CoA = N(6)-biotinyl-L-lysyl-[protein] + malonyl-CoA. The protein operates within lipid metabolism; malonyl-CoA biosynthesis; malonyl-CoA from acetyl-CoA: step 1/1. In terms of biological role, component of the acetyl coenzyme A carboxylase (ACC) complex. First, biotin carboxylase catalyzes the carboxylation of biotin on its carrier protein (BCCP) and then the CO(2) group is transferred by the carboxyltransferase to acetyl-CoA to form malonyl-CoA. The sequence is that of Acetyl-coenzyme A carboxylase carboxyl transferase subunit alpha from Prochlorococcus marinus (strain MIT 9301).